A 223-amino-acid polypeptide reads, in one-letter code: UPF0441 protein YgiB (223 aa).

Positions 178 to 195 (TVPKTAMAPKPATTTTVT) are enriched in low complexity. Residues 178–223 (TVPKTAMAPKPATTTTVTRGGFGESIAKQSTMQRSATGTSSRSMGG) form a disordered region. Over residues 204–223 (AKQSTMQRSATGTSSRSMGG) the composition is skewed to polar residues.

This sequence belongs to the UPF0441 family.

This chain is UPF0441 protein YgiB, found in Shigella boydii serotype 4 (strain Sb227).